Reading from the N-terminus, the 319-residue chain is Formimidoylglutamase (319 aa).

Mn(2+)-binding residues include His127, Asp150, His152, Asp154, Asp242, and Asp244.

It belongs to the arginase family. The cofactor is Mn(2+).

It catalyses the reaction N-formimidoyl-L-glutamate + H2O = formamide + L-glutamate. The protein operates within amino-acid degradation; L-histidine degradation into L-glutamate; L-glutamate from N-formimidoyl-L-glutamate (hydrolase route): step 1/1. Its function is as follows. Catalyzes the conversion of N-formimidoyl-L-glutamate to L-glutamate and formamide. In Halalkalibacterium halodurans (strain ATCC BAA-125 / DSM 18197 / FERM 7344 / JCM 9153 / C-125) (Bacillus halodurans), this protein is Formimidoylglutamase.